A 458-amino-acid chain; its full sequence is Cysteine--tRNA ligase (458 aa).

Cys27 lines the Zn(2+) pocket. The 'HIGH' region signature appears at 29-39 (ITPQSEPHIGH). Zn(2+) is bound by residues Cys207, His232, and Glu236. The 'KMSKS' region motif lies at 265 to 269 (KMSKS). Residue Lys268 coordinates ATP.

The protein belongs to the class-I aminoacyl-tRNA synthetase family. Monomer. Zn(2+) serves as cofactor.

The protein localises to the cytoplasm. It catalyses the reaction tRNA(Cys) + L-cysteine + ATP = L-cysteinyl-tRNA(Cys) + AMP + diphosphate. This Dehalococcoides mccartyi (strain ATCC BAA-2266 / KCTC 15142 / 195) (Dehalococcoides ethenogenes (strain 195)) protein is Cysteine--tRNA ligase.